Reading from the N-terminus, the 268-residue chain is Lipase (268 aa).

Residues 1 to 34 (MRLSRRAATASALLLTPALALFGASAAVSAPRIQ) form the signal peptide. Residue S44 is the Nucleophile of the active site. Intrachain disulfides connect C61/C86, C127/C135, and C185/C232. Residue H250 is part of the active site.

Monomer.

The protein localises to the secreted. It carries out the reaction a triacylglycerol + H2O = a diacylglycerol + a fatty acid + H(+). It catalyses the reaction hexadecanoyl-CoA + H2O = hexadecanoate + CoA + H(+). Inhibited by 3,4-dichloroisocoumarin and tetrahydrolipstatin in the absence of substrate, but by phenylmethylsulfonyl fluoride (PMSF) only in the presence of substrate. Several water-miscible solvents enhance the lipase hydrolytic activity in vitro. Tetrahydrofuran and N,N-dimethylformamide (both 50%) inactivate the enzyme with t1/2 of 5 minutes and t1/2 of 2 hours, respectively. Functionally, catalyzes the hydrolysis of p-nitrophenyl esters, alpha- and beta-naphthyl esters, and triacylglycerols, with a preference for medium acyl chain length (C8-C12). Shows a much higher hydrolysis rate of glycerol esters of unsaturated C16 and C18 fatty acids than that of their saturated counterparts, and a preference for cis double bond. Is also able to hydrolyze several natural oils and Tween detergents. Also displays thioesterase and phospholipase activities, towards palmitoyl-coenzyme A and diheptanoyl glycerophosphocholine, respectively. Shows transesterification activity of racemic 1-phenyl ethanol with vinyl acetate in hexane, proceeding with partial (R)-enantioselectivity. This Streptomyces rimosus protein is Lipase.